Consider the following 145-residue polypeptide: Transcriptional anti-antiactivator ExsC (145 aa).

Homodimer. Interacts with ExsE. Interacts directly with ExsD to form a heterotetrameric complex.

It is found in the cytoplasm. Its activity is regulated as follows. In the absence of inducing signals, ExsE interacts with and inhibits ExsC activity. Its function is as follows. Part of the regulatory cascade that plays a role in the transcriptional regulation of the type III secretion system (T3SS). Interacts with antiactivator ExsD to inhibit its activity leading to ExsA-mediated transcription. This chain is Transcriptional anti-antiactivator ExsC (exsC), found in Pseudomonas aeruginosa (strain ATCC 15692 / DSM 22644 / CIP 104116 / JCM 14847 / LMG 12228 / 1C / PRS 101 / PAO1).